A 510-amino-acid polypeptide reads, in one-letter code: ATP synthase subunit alpha (510 aa).

169 to 176 is an ATP binding site; it reads GDRQTGKT.

The protein belongs to the ATPase alpha/beta chains family. F-type ATPases have 2 components, CF(1) - the catalytic core - and CF(0) - the membrane proton channel. CF(1) has five subunits: alpha(3), beta(3), gamma(1), delta(1), epsilon(1). CF(0) has three main subunits: a(1), b(2) and c(9-12). The alpha and beta chains form an alternating ring which encloses part of the gamma chain. CF(1) is attached to CF(0) by a central stalk formed by the gamma and epsilon chains, while a peripheral stalk is formed by the delta and b chains.

Its subcellular location is the cell inner membrane. It catalyses the reaction ATP + H2O + 4 H(+)(in) = ADP + phosphate + 5 H(+)(out). In terms of biological role, produces ATP from ADP in the presence of a proton gradient across the membrane. The alpha chain is a regulatory subunit. This is ATP synthase subunit alpha from Nitrobacter hamburgensis (strain DSM 10229 / NCIMB 13809 / X14).